We begin with the raw amino-acid sequence, 155 residues long: Ribonuclease H (155 aa).

The region spanning 9–150 (DGQQVEMWTD…ADALANQGVE (142 aa)) is the RNase H type-1 domain. 4 residues coordinate Mg(2+): Asp-18, Glu-56, Asp-78, and Asp-142.

The protein belongs to the RNase H family. In terms of assembly, monomer. Mg(2+) is required as a cofactor.

Its subcellular location is the cytoplasm. It carries out the reaction Endonucleolytic cleavage to 5'-phosphomonoester.. Its function is as follows. Endonuclease that specifically degrades the RNA of RNA-DNA hybrids. The sequence is that of Ribonuclease H from Bordetella bronchiseptica (strain ATCC BAA-588 / NCTC 13252 / RB50) (Alcaligenes bronchisepticus).